A 76-amino-acid polypeptide reads, in one-letter code: Zinc finger protein 706 (76 aa).

Positions 1–13 (MARGQQKIQSQQK) are enriched in low complexity. Disordered regions lie at residues 1–32 (MARG…QKAA) and 53–76 (TFKQ…DVQA). The segment covering 14-25 (NAKKQAGQKKKQ) has biased composition (basic residues). Residues 39–62 (YTCTVCRTQMPDPKTFKQHFESKH) form a C2H2-type zinc finger. The segment covering 53–62 (TFKQHFESKH) has biased composition (basic and acidic residues).

The protein localises to the cytoplasm. It localises to the nucleus. Its function is as follows. Transcription repressor involved in the exit of embryonic stem cells (ESCs) from self-renewal. Acts by repressing expression of KLF4. In Homo sapiens (Human), this protein is Zinc finger protein 706.